The sequence spans 377 residues: Endoplasmic reticulum-Golgi intermediate compartment protein 2 (377 aa).

Residues 1 to 33 lie on the Cytoplasmic side of the membrane; the sequence is MRRLNRRKTLSLVKELDAFPKVPDSYVETSASG. The helical transmembrane segment at 34 to 54 threads the bilayer; the sequence is GTVSLIAFTTMALLTIMEFSV. Over 55–319 the chain is Lumenal; the sequence is YQDTWMKYEY…PFWQFFVRLC (265 aa). Residues 320–340 form a helical membrane-spanning segment; sequence GIIGGIFSTTGMLHGIGKFIV. Residues 341-377 are Cytoplasmic-facing; that stretch reads EIICCRFRLGSYKPVRSVPFADGHTDNHLPLLENNTH.

This sequence belongs to the ERGIC family. As to quaternary structure, may form a heteromeric complex composed of ERGIC1, ERGIC2 and ERGIC3. Interacts with ERGIC3, the interaction is required for the stable expression of both proteins. May interact with EEF1A1.

It localises to the endoplasmic reticulum-Golgi intermediate compartment membrane. The protein resides in the golgi apparatus. The protein localises to the cis-Golgi network membrane. It is found in the endoplasmic reticulum membrane. Its subcellular location is the cytoplasm. It localises to the nucleus. Its function is as follows. Possible role in transport between endoplasmic reticulum and Golgi. This is Endoplasmic reticulum-Golgi intermediate compartment protein 2 (Ergic2) from Mus musculus (Mouse).